We begin with the raw amino-acid sequence, 193 residues long: Intracellular heme transport protein HutX (193 aa).

Y116 lines the heme pocket.

As to quaternary structure, homodimer. Interacts with HutZ.

It localises to the cytoplasm. Its function is as follows. Binds heme. Heme is transferred to the heme-degrading enzyme HutZ via a specific protein-protein interaction. In Vibrio cholerae serotype O1 (strain ATCC 39315 / El Tor Inaba N16961), this protein is Intracellular heme transport protein HutX.